The primary structure comprises 537 residues: Cytochrome P450 86A8 (537 aa).

Residues 3-23 (ISTALMILSAITAYFLWLTFI) traverse the membrane as a helical segment. A heme-binding site is contributed by cysteine 458.

It belongs to the cytochrome P450 family. Heme serves as cofactor. In terms of tissue distribution, expressed in leaves, stems, flowers and siliques. Expressed at low levels in roots.

Its subcellular location is the membrane. The catalysed reaction is an organic molecule + reduced [NADPH--hemoprotein reductase] + O2 = an alcohol + oxidized [NADPH--hemoprotein reductase] + H2O + H(+). Catalyzes the omega-hydroxylation of various fatty acids (FA). Acts on saturated and unsaturated fatty acids with chain lengths from C12 to C18. May be involved in the biosynthesis of cutin in the epidermis which prevents post-genital organ fusions. Hydroxylated FAs may be important for trichome differentiation, establishment of apical dominance and senescence. This Arabidopsis thaliana (Mouse-ear cress) protein is Cytochrome P450 86A8 (CYP86A8).